The following is a 126-amino-acid chain: Small ribosomal subunit protein uS12 (126 aa).

The disordered stretch occupies residues 1–28; the sequence is MPTINQLVRKGRQSETTKSKSPALQDCP. Position 89 is a 3-methylthioaspartic acid (D89). The tract at residues 103 to 126 is disordered; sequence DTQGVKDRKQARSKYGAKRAKAAK. Basic residues predominate over residues 113–126; it reads ARSKYGAKRAKAAK.

It belongs to the universal ribosomal protein uS12 family. Part of the 30S ribosomal subunit. Contacts proteins S8 and S17. May interact with IF1 in the 30S initiation complex.

Its function is as follows. With S4 and S5 plays an important role in translational accuracy. In terms of biological role, interacts with and stabilizes bases of the 16S rRNA that are involved in tRNA selection in the A site and with the mRNA backbone. Located at the interface of the 30S and 50S subunits, it traverses the body of the 30S subunit contacting proteins on the other side and probably holding the rRNA structure together. The combined cluster of proteins S8, S12 and S17 appears to hold together the shoulder and platform of the 30S subunit. The chain is Small ribosomal subunit protein uS12 from Burkholderia orbicola (strain MC0-3).